A 200-amino-acid chain; its full sequence is Molybdopterin synthase catalytic subunit (200 aa).

Positions 16 to 30 are enriched in polar residues; it reads KLPSSHQSVEDSASE. The tract at residues 16–43 is disordered; sequence KLPSSHQSVEDSASEPSGYEAKDPPQDT. A Phosphoserine modification is found at Ser20. Residues 154–155, Lys170, and 177–179 contribute to the substrate site; these read HR and KKE.

The protein belongs to the MoaE family. MOCS2B subfamily. Heterotetramer; composed of 2 small (MOCS2A) and 2 large (MOCS2B) subunits.

Its subcellular location is the cytoplasm. The protein resides in the cytosol. It carries out the reaction 2 [molybdopterin-synthase sulfur-carrier protein]-C-terminal-Gly-aminoethanethioate + cyclic pyranopterin phosphate + H2O = molybdopterin + 2 [molybdopterin-synthase sulfur-carrier protein]-C-terminal Gly-Gly + 2 H(+). Its pathway is cofactor biosynthesis; molybdopterin biosynthesis. In terms of biological role, catalytic subunit of the molybdopterin synthase complex, a complex that catalyzes the conversion of precursor Z into molybdopterin. Acts by mediating the incorporation of 2 sulfur atoms from thiocarboxylated MOCS2A into precursor Z to generate a dithiolene group. This chain is Molybdopterin synthase catalytic subunit, found in Rattus norvegicus (Rat).